A 228-amino-acid chain; its full sequence is 7-cyano-7-deazaguanine synthase (228 aa).

8-18 is a binding site for ATP; sequence LSGGLDSTTCL. 4 residues coordinate Zn(2+): cysteine 188, cysteine 198, cysteine 201, and cysteine 204.

The protein belongs to the QueC family. Zn(2+) is required as a cofactor.

It catalyses the reaction 7-carboxy-7-deazaguanine + NH4(+) + ATP = 7-cyano-7-deazaguanine + ADP + phosphate + H2O + H(+). Its pathway is purine metabolism; 7-cyano-7-deazaguanine biosynthesis. Its function is as follows. Catalyzes the ATP-dependent conversion of 7-carboxy-7-deazaguanine (CDG) to 7-cyano-7-deazaguanine (preQ(0)). The protein is 7-cyano-7-deazaguanine synthase of Legionella pneumophila (strain Paris).